The chain runs to 927 residues: Clumping factor A (927 aa).

The N-terminal stretch at 1–39 (MNMKKKEKHAIRKKSIGVASVLVGTLIGFGLLSSKEADA) is a signal peptide. The YSIRK-G/S signaling motif signature appears at 9 to 20 (HAIRKKSIGVAS). 2 disordered regions span residues 34-200 (SKEA…SNKD) and 529-898 (FNNG…SEDE). Residues 40–542 (SENSVTQSDS…SGSGDGIDKP (503 aa)) form a ligand binding A region region. Positions 47 to 65 (SDSASNESKSNDSSSVSAA) are enriched in low complexity. Positions 71–105 (TNVSDTKTSSNTNNGETSVAQNPAQQETTQSSSTN) are enriched in polar residues. Low complexity-rich tracts occupy residues 106–132 (ATTE…ATTQ) and 143–162 (NQTS…SVNS). The span at 163–200 (PQNSTNAENVSTTQDTSTEATPSNNESAPQSTDASNKD) shows a compositional bias: polar residues. The span at 547 to 565 (QPDEPGEIEPIPEDSDSDP) shows a compositional bias: acidic residues. A compositionally biased stretch (low complexity) spans 566 to 598 (GSDSGSDSNSDSGSDSGSDSTSDSGSDSASDSD). The segment covering 599-855 (SASDSDSASD…DSDSESDSNS (257 aa)) has biased composition (acidic residues). The span at 856 to 867 (DSESVSNNNVVP) shows a compositional bias: low complexity. The span at 881–890 (NEAKDSKEPL) shows a compositional bias: basic and acidic residues. Residues 890 to 894 (LPDTG) carry the LPXTG sorting signal motif. Pentaglycyl murein peptidoglycan amidated threonine is present on Thr893. A propeptide spans 894-927 (GSEDEANTSLIWGLLASIGSLLLFRRKKENKDKK) (removed by sortase).

It belongs to the serine-aspartate repeat-containing protein (SDr) family.

The protein localises to the secreted. The protein resides in the cell wall. Its function is as follows. Cell surface-associated protein implicated in virulence. Promotes bacterial attachment exclusively to the gamma-chain of human fibrinogen. Induces formation of bacterial clumps, which diminish the ability of group IIA phospholipase A2 to cause bacterial phospholipid hydrolysis and killing. Significantly decreases macrophage phagocytosis possibly thanks to the clumps, clumped bacteria being too large to be phagocytosed. Dominant factor responsible for human platelet aggregation, which may be an important mechanism for initiating infective endocarditis. Enhances spleen cell proliferative response in vitro, contributing significantly to the immunostimulatory activity of S.aureus. The chain is Clumping factor A (clfA) from Staphylococcus aureus (strain NCTC 8325 / PS 47).